A 56-amino-acid polypeptide reads, in one-letter code: Large ribosomal subunit protein bL33 (56 aa).

Over residues 1–12 (MATKGGREKIKL) the composition is skewed to basic and acidic residues. Residues 1–28 (MATKGGREKIKLESTAGTGHFYTTSKNK) are disordered. The span at 15-25 (TAGTGHFYTTS) shows a compositional bias: polar residues.

The protein belongs to the bacterial ribosomal protein bL33 family.

This chain is Large ribosomal subunit protein bL33, found in Albidiferax ferrireducens (strain ATCC BAA-621 / DSM 15236 / T118) (Rhodoferax ferrireducens).